The primary structure comprises 25 residues: Caerin-1.3 (25 aa).

Leu-25 is modified (leucine amide).

As to expression, expressed by the skin parotoid and/or rostral glands.

It is found in the secreted. Its function is as follows. Antibacterial peptide, that adopts an alpha helical conformation which can disrupt bacterial membranes. Each caerin displays a different antimicrobial specificity. In Ranoidea caerulea (Green tree frog), this protein is Caerin-1.3.